Consider the following 348-residue polypeptide: MADIYRFPKFSYEDNGTVEPLPLRTGPDKKAIPHIRIIKVGVPPKHGVRYLDLLLLGFFETPKQTTNLGSVSDLTEPTSYSICGSGSLPIGVAKYYGTDQELLKACTDLRITVRRTVRAGEMIVYMVGSIGAPLLPWSGRLRQGMIFNANKVALAPQCLPVDKDIRLRVVFVNGTSLGAITIAKIPKTLADLALPNSISVNLLVTLKTGISTEQKGVLPVLDDQGEKKLNFMVHLGLIRRKVGKIYSVEYCKSKIERMRLIFSLGLTGGISFHVQVTGTLSKTFMSQLAWKRAVCFPLMDVNPHMNMVIWAASVEITGVDAVFQPAIPRDFRYYPNVVAKNIGRIRKL.

The short motif at 50 to 53 is the YLDL motif element; sequence YLDL. Position 70 is a phosphoserine; by host (Ser70).

This sequence belongs to the morbillivirus/respirovirus/rubulavirus M protein family. Homomultimer. Binds to the cytoplasmic regions of F and HN proteins. Interacts with nucleocapsid. Interacts with human alpha-tubulin and beta-tubulin. Interacts with host ANP32B. A large portion is phosphorylated in the cytoplasm, but not in virion. However, this phosphorylation is not essential for virus replication.

The protein localises to the virion. The protein resides in the host cytoplasm. It is found in the host cell membrane. Plays a crucial role in virion assembly and budding. Forms a shell at the inner face of the plasma membrane and concentrates the HN and F glycoproteins. Acts as a negative regulator for transcription and replication by sticking to the nucleocapsid. This effect might be regulated by the cytoplasmic interaction with tubulin that dissociates the M protein from the nucleocapsid. This Sendai virus (strain Enders) (SeV) protein is Matrix protein (M).